A 517-amino-acid chain; its full sequence is MVNSLLFGEMALAFGCPPGGGGGGCPGGGGGGGGAGPGPSPVTAALRDDLGSNIHLLKGLNVRFRCFLAKVHELERRNRLLEKQLEQQQSERERRLRYKTFSREQAVQTGPELLRPPAPGGGHGLSSGAAAGANANAVALGGLPPGGGSHPQHYGRLPGTIWSYTQVRRTGGGGVETVQGPGVSWVHPDGVGVQIDTITPEIRALYNVLAKVKRERDEYKRRWEEELAKRMNLQTMVDTLQEAAQEADAIQEEMNEKIERLKAELVVFKGLMSDPMTDLDTKIQEKAMKVDMDICRRIDITAKLCDVAQQRNSEDVSKIFQVVPKKKERKVASDDDISEQDGEVNRFSDDEVGSMNITDEMKRMFNQLRETFDFDDDCDSLTWEENEDTLLLWEDFTNCNPTIDLQGEQEENLGNLIHETESFFKTRDKEYQETIGQIELELATAKSDMNRHLHEYMEMCSMKRGLDVQMETCRRLIKGSADRNSPSPSSVASSDSGSTDEIQDEFEREADVEPMVS.

In terms of domain architecture, IF rod spans 53-484 (NIHLLKGLNV…RLIKGSADRN (432 aa)). Disordered regions lie at residues 104–129 (EQAVQTGPELLRPPAPGGGHGLSSGA), 330–349 (KVASDDDISEQDGEVNRFSD), and 478–517 (KGSADRNSPSPSSVASSDSGSTDEIQDEFEREADVEPMVS). Residues 485 to 497 (SPSPSSVASSDSG) are compositionally biased toward low complexity. Residues 501 to 517 (EIQDEFEREADVEPMVS) are compositionally biased toward acidic residues.

The protein belongs to the intermediate filament family.

The polypeptide is Intermediate filament family orphan 2 (IFFO2) (Homo sapiens (Human)).